Here is a 119-residue protein sequence, read N- to C-terminus: Transcription and mRNA export factor SUS1 (119 aa).

Belongs to the ENY2 family. In terms of assembly, component of the nuclear pore complex (NPC)-associated TREX-2 complex (transcription and export complex 2), composed of at least SUS1, SAC3, THP1, SEM1, and CDC31. TREX-2 contains 2 SUS1 chains. The TREX-2 complex interacts with the nucleoporin NUP1. Component of the 1.8 MDa SAGA transcription coactivator-HAT complex. SAGA is built of 5 distinct domains with specialized functions. Within the SAGA complex, SUS1, SGF11, SGF73 and UBP8 form an additional subcomplex of SAGA called the DUB module (deubiquitination module). Interacts directly with THP1, SAC3, SGF11, and with the RNA polymerase II.

It localises to the nucleus. The protein localises to the nucleoplasm. It is found in the cytoplasm. Its subcellular location is the P-body. Involved in mRNA export coupled transcription activation by association with both the TREX-2 and the SAGA complexes. At the promoters, SAGA is required for recruitment of the basal transcription machinery. It influences RNA polymerase II transcriptional activity through different activities such as TBP interaction and promoter selectivity, interaction with transcription activators, and chromatin modification through histone acetylation and deubiquitination. Within the SAGA complex, participates in a subcomplex required for deubiquitination of H2B and for the maintenance of steady-state H3 methylation levels. The TREX-2 complex functions in docking export-competent ribonucleoprotein particles (mRNPs) to the nuclear entrance of the nuclear pore complex (nuclear basket). TREX-2 participates in mRNA export and accurate chromatin positioning in the nucleus by tethering genes to the nuclear periphery. May also be involved in cytoplasmic mRNA decay by interaction with components of P-bodies. The protein is Transcription and mRNA export factor SUS1 of Candida albicans (strain SC5314 / ATCC MYA-2876) (Yeast).